A 175-amino-acid chain; its full sequence is NADH-ubiquinone oxidoreductase chain 6 (175 aa).

5 helical membrane-spanning segments follow: residues 1–21, 25–45, 47–67, 88–108, and 149–169; these read MMTY…VGFS, SPIY…GIVL, FGGS…MMVV, VVLG…YYVL, and YGTW…VVIM.

The protein belongs to the complex I subunit 6 family. As to quaternary structure, core subunit of respiratory chain NADH dehydrogenase (Complex I) which is composed of 45 different subunits.

It is found in the mitochondrion inner membrane. The enzyme catalyses a ubiquinone + NADH + 5 H(+)(in) = a ubiquinol + NAD(+) + 4 H(+)(out). Core subunit of the mitochondrial membrane respiratory chain NADH dehydrogenase (Complex I) which catalyzes electron transfer from NADH through the respiratory chain, using ubiquinone as an electron acceptor. Essential for the catalytic activity and assembly of complex I. The polypeptide is NADH-ubiquinone oxidoreductase chain 6 (MT-ND6) (Ovis aries (Sheep)).